The chain runs to 217 residues: Deoxyribose-phosphate aldolase (217 aa).

Catalysis depends on Asp90, which acts as the Proton donor/acceptor. The active-site Schiff-base intermediate with acetaldehyde is Lys152. Catalysis depends on Lys181, which acts as the Proton donor/acceptor.

The protein belongs to the DeoC/FbaB aldolase family. DeoC type 1 subfamily.

It localises to the cytoplasm. It catalyses the reaction 2-deoxy-D-ribose 5-phosphate = D-glyceraldehyde 3-phosphate + acetaldehyde. It participates in carbohydrate degradation; 2-deoxy-D-ribose 1-phosphate degradation; D-glyceraldehyde 3-phosphate and acetaldehyde from 2-deoxy-alpha-D-ribose 1-phosphate: step 2/2. Catalyzes a reversible aldol reaction between acetaldehyde and D-glyceraldehyde 3-phosphate to generate 2-deoxy-D-ribose 5-phosphate. The sequence is that of Deoxyribose-phosphate aldolase from Metamycoplasma hominis (Mycoplasma hominis).